A 229-amino-acid polypeptide reads, in one-letter code: PKHD-type hydroxylase BBta_3541 (229 aa).

Positions 78-180 constitute a Fe2OG dioxygenase domain; it reads QIFPPLFNRY…RVASFFWMQS (103 aa). 3 residues coordinate Fe cation: histidine 98, aspartate 100, and histidine 161. Arginine 171 is a 2-oxoglutarate binding site.

Fe(2+) is required as a cofactor. The cofactor is L-ascorbate.

The polypeptide is PKHD-type hydroxylase BBta_3541 (Bradyrhizobium sp. (strain BTAi1 / ATCC BAA-1182)).